The sequence spans 315 residues: Jacalin-related lectin 10 (315 aa).

The first 23 residues, 1–23 (MVIIYIFLFLSSAIIDSTGLAKA), serve as a signal peptide directing secretion. 2 consecutive Jacalin-type lectin domains span residues 24 to 165 (QKLD…YLTT) and 168 to 312 (PTKS…YFSP).

The protein belongs to the jacalin lectin family.

The polypeptide is Jacalin-related lectin 10 (JAL10) (Arabidopsis thaliana (Mouse-ear cress)).